A 525-amino-acid polypeptide reads, in one-letter code: G patch domain-containing protein 3 (525 aa).

Disordered regions lie at residues 54-85 (ERGPPQASPEAARAGPDPAAEDPVLAQAPASD) and 246-317 (EQEE…QERT). The segment covering 274–299 (DEPEDEGQQQEEEEESGSEEDDDRGE) has biased composition (acidic residues). Residues 300 to 317 (EWERHEALHEDVTGQERT) show a composition bias toward basic and acidic residues. The G-patch domain maps to 411-459 (TKGIGRKVMERQGWAEGQGLGSRCSGVPEALDGDGQHPRCKRGLGYHGE).

In terms of assembly, interacts with mitochondrial MAVS; the interaction is markedly increased upon viral infection.

The protein resides in the nucleus. It is found in the cytoplasm. Involved in transcriptional regulation. It is able to activate transcription from CXCR4 promoter and therefore it might control neural crest cell migration involved in ocular and craniofacial development. Is a negative regulator of immune antiviral response, acting via down-regulation of RIG-I-like receptors signaling and inhibition of type I interferon production. The control mechanism involves interaction with mitochondrial MAVS and inhibition of MAVS assembly with downstream proteins implicated in antiviral response, such as TBK1 and TRAF6. This is G patch domain-containing protein 3 (Gpatch3) from Mus musculus (Mouse).